The primary structure comprises 477 residues: Inner membrane transporter YgjI (477 aa).

Residues 1–8 (MSDTKRNT) are Periplasmic-facing. Residues 9–29 (IGKFGLLSLTFAAVYSFNNVI) traverse the membrane as a helical segment. The Cytoplasmic portion of the chain corresponds to 30-41 (NNNIELGLASAP). A helical transmembrane segment spans residues 42-62 (MFFLATIFYFIPFCLIIAEFV). Residues 63–83 (SLNKNSEAGVYAWVKSSLGGR) are Periplasmic-facing. Residues 84 to 104 (WAFITAYTYWFVNLFFFTSLL) traverse the membrane as a helical segment. At 105–120 (PRVIAYASYAFLGYEY) the chain is on the cytoplasmic side. The helical transmembrane segment at 121 to 141 (IMTPVATTIISMVLFAFSTWV) threads the bilayer. The Periplasmic portion of the chain corresponds to 142–158 (STNGAKMLGPITSVTST). Residues 159-179 (LMLLLTLSYILLAGTALVGGV) form a helical membrane-spanning segment. The Cytoplasmic segment spans residues 180–196 (QPADAITVDAMIPNFNW). Residues 197–217 (AFLGVTTWIFMAAGGAESVAV) traverse the membrane as a helical segment. Residues 218-232 (YVNDVKGGSKSFVKV) are Periplasmic-facing. The helical transmembrane segment at 233–253 (IILAGIFIGVLYSVSSVLINV) threads the bilayer. Over 254 to 263 (FVSSKELKFT) the chain is Cytoplasmic. A helical transmembrane segment spans residues 264–284 (GGSVQVFHGMAAYFGLPEALM). Residues 285–286 (NR) are Periplasmic-facing. Residues 287–307 (FVGLVSFTAMFGSLLMWTATP) traverse the membrane as a helical segment. The Cytoplasmic segment spans residues 308-335 (VKIFFSEIPEGIFGKKTVELNENGVPAR). A helical transmembrane segment spans residues 336–356 (AAWIQFLIVIPLMIIPMLGSN). Over 357–364 (TVQDLMNT) the chain is Periplasmic. Residues 365 to 385 (IINMTAAASMLPPLFIMLAYL) form a helical membrane-spanning segment. Residues 386–405 (NLRAKLDHLPRDFRMGSRRT) are Cytoplasmic-facing. A helical transmembrane segment spans residues 406–426 (GIIVVSMLIAIFAVGFVASTF). Residues 427–431 (PTGAN) lie on the Periplasmic side of the membrane. Residues 432-452 (ILTIIFYNVGGIVIFLGFAWW) form a helical membrane-spanning segment. The Cytoplasmic portion of the chain corresponds to 453–477 (KYSKYIKGLTAEERHIEATPASNVD).

The protein belongs to the amino acid-polyamine-organocation (APC) superfamily.

Its subcellular location is the cell inner membrane. This chain is Inner membrane transporter YgjI (ygjI), found in Escherichia coli (strain K12).